Reading from the N-terminus, the 159-residue chain is Methyl-coenzyme M reductase operon protein D (159 aa).

In terms of assembly, MCR is composed of three subunits: alpha, beta, and gamma. The function of proteins C and D is not known.

The protein is Methyl-coenzyme M reductase operon protein D (mcrD) of Methanococcus voltae.